Reading from the N-terminus, the 89-residue chain is MTLANIKSAKKRAVQSEKSRQHNASQRSMMRTYIKKVYAAVAAGEKAAAQAAFVEMQKVVDRMASKGLIHANKAANHKSKLVAQIKKLA.

The interval 1 to 28 is disordered; sequence MTLANIKSAKKRAVQSEKSRQHNASQRS.

The protein belongs to the bacterial ribosomal protein bS20 family.

Its function is as follows. Binds directly to 16S ribosomal RNA. This chain is Small ribosomal subunit protein bS20, found in Mannheimia succiniciproducens (strain KCTC 0769BP / MBEL55E).